The chain runs to 118 residues: Non-specific lipid-transfer protein 3 (118 aa).

A signal peptide spans 1-25 (MARAAATQLVLVAMVAAMLLVATDA). Disulfide bonds link C29-C77, C39-C54, C55-C100, and C75-C114.

Belongs to the plant LTP family.

Functionally, plant non-specific lipid-transfer proteins transfer phospholipids as well as galactolipids across membranes. May play a role in wax or cutin deposition in the cell walls of expanding epidermal cells and certain secretory tissues. The polypeptide is Non-specific lipid-transfer protein 3 (LTP3) (Hordeum vulgare (Barley)).